The primary structure comprises 46 residues: MTPQGNKPSSHDVITGRWTPSDADRAAGRVSGFGVITNIINGGLDC.

The tract at residues 1-21 (MTPQGNKPSSHDVITGRWTPS) is disordered.

Belongs to the glycosyl hydrolase 19 family. Chitinase class I subfamily.

The catalysed reaction is Random endo-hydrolysis of N-acetyl-beta-D-glucosaminide (1-&gt;4)-beta-linkages in chitin and chitodextrins.. Functionally, defense against chitin-containing fungal and bacterial pathogens. The protein is Endochitinase 3 of Arachis hypogaea (Peanut).